Reading from the N-terminus, the 196-residue chain is dTDP-4-dehydro-6-deoxyglucose 3-epimerase (196 aa).

Substrate-binding positions include R21, E26, 45–47, and R57; that span reads QVN. Residue H60 is the Proton acceptor of the active site. Positions 70 and 117 each coordinate substrate. Y130 acts as the Proton donor in catalysis. Residues E141 and R166 each contribute to the substrate site.

This sequence belongs to the dTDP-4-dehydrorhamnose 3,5-epimerase family. In terms of assembly, homodimer.

It carries out the reaction dTDP-4-dehydro-6-deoxy-alpha-D-glucose = dTDP-4-dehydro-6-deoxy-alpha-D-allose. It functions in the pathway antibiotic biosynthesis. In terms of biological role, involved in the biosynthesis of dTDP-6-deoxy-D-allose, an intermediate in the biosynthesis of mycinose, which is one of the two unusual sugars attached to the 16-membered macrolactone ring of the aglycone antibiotic dihydrochalcomycin (GERI-155). Catalyzes the conversion of dTDP-4-oxo-6-deoxyglucose to dTDP-4-oxo-6-deoxyallose, via a C-3 epimerization. The sequence is that of dTDP-4-dehydro-6-deoxyglucose 3-epimerase from Streptomyces sp.